The following is a 420-amino-acid chain: Tyrosine--tRNA ligase 2 (420 aa).

L-tyrosine is bound at residue Y34. The 'HIGH' region motif lies at 39–48 (PTGDSMHIGH). Y168 and Q172 together coordinate L-tyrosine. The 'KMSKS' region signature appears at 230 to 234 (KFGKS). K233 is an ATP binding site. Residues 352 to 418 (KNIVEWLVDL…GKKNYSLVKL (67 aa)) form the S4 RNA-binding domain.

It belongs to the class-I aminoacyl-tRNA synthetase family. TyrS type 1 subfamily. In terms of assembly, homodimer.

It is found in the cytoplasm. The catalysed reaction is tRNA(Tyr) + L-tyrosine + ATP = L-tyrosyl-tRNA(Tyr) + AMP + diphosphate + H(+). In terms of biological role, catalyzes the attachment of tyrosine to tRNA(Tyr) in a two-step reaction: tyrosine is first activated by ATP to form Tyr-AMP and then transferred to the acceptor end of tRNA(Tyr). The sequence is that of Tyrosine--tRNA ligase 2 from Bacillus cereus (strain ATCC 14579 / DSM 31 / CCUG 7414 / JCM 2152 / NBRC 15305 / NCIMB 9373 / NCTC 2599 / NRRL B-3711).